The sequence spans 877 residues: Inner centromere protein (877 aa).

Positions 47–142 (HYSDQPELMP…SQVAAPADRS (96 aa)) are disordered. Residues 62 to 71 (KNRKRRKRPS) show a composition bias toward basic residues. The span at 98-111 (SKRDSQRLQNKEDT) shows a compositional bias: basic and acidic residues. Polar residues predominate over residues 119–134 (QELSSQTVSRRLTRSQ). Residues 135–270 (VAAPADRSEV…KHNERDDKEP (136 aa)) are interaction with CBX5. The short motif at 155-159 (PVVEI) is the PXVXL/I motif element. 5 disordered regions span residues 178–210 (RAENHSASLPPSSDDKSPKESSAAESQPLPAAS), 248–459 (LGLE…ASKV), 498–548 (LQHD…RLRK), 572–695 (ALFD…KAAR), and 707–805 (LQKE…PAWA). Over residues 261–271 (KHNERDDKEPS) the composition is skewed to basic and acidic residues. The segment covering 272–283 (QRTTDSPETPTG) has biased composition (polar residues). Over residues 339-351 (SVSSSSVNGSGSE) the composition is skewed to low complexity. Positions 384–403 (LRSQTVNRNEQQQETSNNEC) are enriched in polar residues. 5 stretches are compositionally biased toward basic and acidic residues: residues 500–548 (HDPK…RLRK), 572–591 (ALFDEKTEKAREERLAEEKI), 598–615 (KKMEEAEARRRQDEEARK), 624–695 (EERR…KAAR), and 707–742 (LQKEMEKKEKEEQLLAEMKRQEQEQKKLPEEQKAKD). The tract at residues 503–715 (KEKERQKLQA…QLQKEMEKKE (213 aa)) is SAH. The span at 744–765 (AQTQHLENKENSPACNSYQMTP) shows a compositional bias: polar residues. The IN box stretch occupies residues 781–823 (YGMDLNSDDSTDDESQPRKPIPAWASGNQLSQAVIRQYYNPPN).

The protein belongs to the INCENP family. Component of the chromosomal passenger complex (CPC) composed of at least BIRC5/survivin, CDCA8/borealin, INCENP and AURKB; in the complex binds directly to AURKB via the IN box, and forms a triple-helix bundle-based subcomplex with BIRC5 and CDCA8 via its N-terminus. The initially reported homodimerization is questioned as the SAH domain is shown to be monomeric. Interacts with CBX5.

Its subcellular location is the nucleus. It localises to the chromosome. The protein resides in the centromere. It is found in the cytoplasm. The protein localises to the cytoskeleton. Its subcellular location is the spindle. It localises to the midbody. The protein resides in the kinetochore. Functionally, component of the chromosomal passenger complex (CPC), a complex that acts as a key regulator of mitosis. The CPC complex has essential functions at the centromere in ensuring correct chromosome alignment and segregation and is required for chromatin-induced microtubule stabilization and spindle assembly. Acts as a scaffold regulating CPC localization and activity. The C-terminus associates with AURKB, the N-terminus associated with BIRC5/survivin and CDCA8/borealin tethers the CPC to the inner centromere, and the microtubule binding activity within the central SAH domain directs AURKB toward substrates near microtubules. The flexibility of the SAH domain is proposed to allow AURKB to follow substrates on dynamic microtubules while ensuring CPC docking to static chromatin. Activates AURKB. In Gallus gallus (Chicken), this protein is Inner centromere protein (INCENP).